The sequence spans 506 residues: Nostrin (506 aa).

The region spanning 1-260 is the F-BAR domain; the sequence is MRDPLTDCSY…AISKVDVEKD (260 aa). Ser114 is modified (phosphoserine). Coiled-coil stretches lie at residues 160–230 and 305–334; these read SLTQ…LNQY and KLGR…ASSS. Residues 292 to 372 enclose the REM-1 domain; that stretch reads PMDKERRKSL…SYKLSSVLAD (81 aa). The disordered stretch occupies residues 413-435; the sequence is KAESKAPAGGQNNPSSSPSGSTV. Over residues 419 to 435 the composition is skewed to low complexity; sequence PAGGQNNPSSSPSGSTV. The 60-residue stretch at 438 to 497 folds into the SH3 domain; sequence ASKHLCKALYTFQARQDDELNLEKGDIVTVHEKKEEGWWFGSLKGKRGHFPAAYVEELPP. Residue Ser479 is modified to Phosphoserine.

Homotrimer. Interacts with NOS3, DNM2, WASL and CAV1. Interacts with DAB2. Interacts (via SH3 domain) with DNM2; this interaction allows the recruitment of NOS3 to dynamin-positive structures.

The protein resides in the cell membrane. The protein localises to the cytoplasmic vesicle. It is found in the cytoplasm. It localises to the cytoskeleton. Its subcellular location is the nucleus. Functionally, multivalent adapter protein which may decrease NOS3 activity by inducing its translocation away from the plasma membrane. This is Nostrin from Mus musculus (Mouse).